The primary structure comprises 230 residues: Leucyl/phenylalanyl-tRNA--protein transferase (230 aa).

Belongs to the L/F-transferase family.

It is found in the cytoplasm. It carries out the reaction N-terminal L-lysyl-[protein] + L-leucyl-tRNA(Leu) = N-terminal L-leucyl-L-lysyl-[protein] + tRNA(Leu) + H(+). The enzyme catalyses N-terminal L-arginyl-[protein] + L-leucyl-tRNA(Leu) = N-terminal L-leucyl-L-arginyl-[protein] + tRNA(Leu) + H(+). It catalyses the reaction L-phenylalanyl-tRNA(Phe) + an N-terminal L-alpha-aminoacyl-[protein] = an N-terminal L-phenylalanyl-L-alpha-aminoacyl-[protein] + tRNA(Phe). Functions in the N-end rule pathway of protein degradation where it conjugates Leu, Phe and, less efficiently, Met from aminoacyl-tRNAs to the N-termini of proteins containing an N-terminal arginine or lysine. In Erwinia tasmaniensis (strain DSM 17950 / CFBP 7177 / CIP 109463 / NCPPB 4357 / Et1/99), this protein is Leucyl/phenylalanyl-tRNA--protein transferase.